A 1048-amino-acid chain; its full sequence is Bifunctional heparan sulfate N-deacetylase/N-sulfotransferase (1048 aa).

At 1–172 (MTISGGNQHN…RRCFGINVRR (172 aa)) the chain is on the cytoplasmic side. Residues 173-192 (CVLALLAITMVSIFYYTHYV) form a helical; Signal-anchor for type II membrane protein membrane-spanning segment. The heparan sulfate N-deacetylase stretch occupies residues 192-752 (VDTGVFNGLI…VRHKKIWSKT (561 aa)). At 193–1048 (DTGVFNGLIQ…WLKDDLSTGT (856 aa)) the chain is on the lumenal side. N-linked (GlcNAc...) asparagine glycosylation is found at asparagine 388 and asparagine 555. The segment at 753-1048 (KNCDSLPKFL…WLKDDLSTGT (296 aa)) is heparan sulfate N-sulfotransferase. The active-site For sulfotransferase activity is lysine 768. A 3'-phosphoadenylyl sulfate-binding site is contributed by 768-772 (KTGTT). The N-linked (GlcNAc...) asparagine glycan is linked to asparagine 823. Serine 877 is a binding site for 3'-phosphoadenylyl sulfate. Asparagine 892 carries N-linked (GlcNAc...) asparagine glycosylation. Cysteine 983 and cysteine 993 are oxidised to a cystine. 3'-phosphoadenylyl sulfate is bound at residue 998–1002 (KGRQY).

The protein belongs to the sulfotransferase 1 family. NDST subfamily. As to quaternary structure, monomer.

It localises to the golgi apparatus membrane. It carries out the reaction alpha-D-glucosaminyl-[heparan sulfate](n) + 3'-phosphoadenylyl sulfate = N-sulfo-alpha-D-glucosaminyl-[heparan sulfate](n) + adenosine 3',5'-bisphosphate + 2 H(+). It participates in glycan metabolism; heparan sulfate biosynthesis. Its pathway is glycan metabolism; heparin biosynthesis. Its function is as follows. Essential bifunctional enzyme that catalyzes both the N-deacetylation and the N-sulfation of glucosamine (GlcNAc) of the glycosaminoglycan in heparan sulfate. Modifies the GlcNAc-GlcA disaccharide repeating sugar backbone to make N-sulfated heparosan, a prerequisite substrate for later modifications in heparin biosynthesis. Plays a role in diffusion of morphogen wingless (wg) via its role in heparan sulfate proteoglycans (HSPGs) biosynthesis, HSPGs being required for movement of wg morphogens. Required for wg signaling during both embryonic and imaginal disk development. Also required for FGF receptor signaling. The polypeptide is Bifunctional heparan sulfate N-deacetylase/N-sulfotransferase (sfl) (Drosophila melanogaster (Fruit fly)).